Consider the following 231-residue polypeptide: Ion-translocating oxidoreductase complex subunit E (231 aa).

A run of 6 helical transmembrane segments spans residues 18–38 (ALVQLLGLCPLLAVTSTATNA), 39–59 (LGLGLATTLVLTLTNLTISTL), 63–83 (TPAEIRIPIYVMIIASVVSAV), 86–106 (LINAYAFGLYQSLGIFIPLIV), 125–145 (ALSALDGFSIGMGATCAMFVL), and 182–202 (PFLLAMLPPGAFIGLGLMLAG).

It belongs to the NqrDE/RnfAE family. As to quaternary structure, the complex is composed of six subunits: RsxA, RsxB, RsxC, RsxD, RsxE and RsxG.

The protein resides in the cell inner membrane. In terms of biological role, part of a membrane-bound complex that couples electron transfer with translocation of ions across the membrane. Required to maintain the reduced state of SoxR. This chain is Ion-translocating oxidoreductase complex subunit E, found in Escherichia coli (strain ATCC 8739 / DSM 1576 / NBRC 3972 / NCIMB 8545 / WDCM 00012 / Crooks).